Here is a 348-residue protein sequence, read N- to C-terminus: Selenide, water dikinase (348 aa).

Cysteine 17 is a catalytic residue. Residues lysine 20 and 48-50 (TRD) contribute to the ATP site. Aspartate 51 is a binding site for Mg(2+). Residues aspartate 68, aspartate 91, and 139-141 (GHS) contribute to the ATP site. Residue aspartate 91 coordinates Mg(2+). Position 227 (aspartate 227) interacts with Mg(2+).

The protein belongs to the selenophosphate synthase 1 family. Class I subfamily. In terms of assembly, homodimer. Mg(2+) serves as cofactor.

It carries out the reaction hydrogenselenide + ATP + H2O = selenophosphate + AMP + phosphate + 2 H(+). Synthesizes selenophosphate from selenide and ATP. The protein is Selenide, water dikinase of Yersinia pestis.